Reading from the N-terminus, the 187-residue chain is GTP cyclohydrolase 1 (187 aa).

Cysteine 76, histidine 79, and cysteine 148 together coordinate Zn(2+).

The protein belongs to the GTP cyclohydrolase I family. Homomer.

The catalysed reaction is GTP + H2O = 7,8-dihydroneopterin 3'-triphosphate + formate + H(+). It participates in cofactor biosynthesis; 7,8-dihydroneopterin triphosphate biosynthesis; 7,8-dihydroneopterin triphosphate from GTP: step 1/1. The chain is GTP cyclohydrolase 1 from Desulforamulus reducens (strain ATCC BAA-1160 / DSM 100696 / MI-1) (Desulfotomaculum reducens).